The sequence spans 92 residues: UPF0223 protein SGO_1052 (92 aa).

It belongs to the UPF0223 family.

The protein is UPF0223 protein SGO_1052 of Streptococcus gordonii (strain Challis / ATCC 35105 / BCRC 15272 / CH1 / DL1 / V288).